The sequence spans 981 residues: Mediator of RNA polymerase II transcription subunit 5 (981 aa).

The protein belongs to the Mediator complex subunit 5 family. Component of the Mediator complex.

The protein localises to the nucleus. Component of the Mediator complex, a coactivator involved in the regulated transcription of nearly all RNA polymerase II-dependent genes. Mediator functions as a bridge to convey information from gene-specific regulatory proteins to the basal RNA polymerase II transcription machinery. Mediator is recruited to promoters by direct interactions with regulatory proteins and serves as a scaffold for the assembly of a functional preinitiation complex with RNA polymerase II and the general transcription factors. In Scheffersomyces stipitis (strain ATCC 58785 / CBS 6054 / NBRC 10063 / NRRL Y-11545) (Yeast), this protein is Mediator of RNA polymerase II transcription subunit 5 (NUT1).